Reading from the N-terminus, the 151-residue chain is MDPALRSYHQRLRLYTPVAMGINLAASSQPLDPEGPIAVTPRPPIRPSSGKAPHPEAPRRSPNWATAGEVDVGDELIAISDERGPPRHDRPPLATSTAPSPHPRPPGYTAVVSPMALQAVDAPSLFVAWLAARWLRGASGLGASCVGLRGM.

Residues 27–107 (SSQPLDPEGP…APSPHPRPPG (81 aa)) form a disordered region. A compositionally biased stretch (basic and acidic residues) spans 80-91 (SDERGPPRHDRP).

It localises to the host nucleus. The protein resides in the host nucleolus. This chain is US8.5 protein (US8.5), found in Human herpesvirus 1 (strain F) (HHV-1).